Here is a 288-residue protein sequence, read N- to C-terminus: Ankyrin repeat and SOCS box protein 8 (288 aa).

S17 bears the Phosphoserine mark. ANK repeat units follow at residues 52 to 81 (GTLK…EVNA), 85 to 113 (YNRT…NPNA), 117 to 146 (NRDT…SVNA), and 150 to 179 (NNDT…EVRV). Residues 235-288 (QLCEKLTVLCSAPGTLKTLARYAVRRSLGLQYLPDAVKGLPLPASLKEYLLLLE) form the SOCS box domain.

Belongs to the ankyrin SOCS box (ASB) family. Interacts with TBK1; this interaction promotes TBK1 proteasomal degradation. Phosphorylated by TBK1.

Its subcellular location is the cytoplasm. Its pathway is protein modification; protein ubiquitination. May be a substrate-recognition component of a SCF-like ECS (Elongin-Cullin-SOCS-box protein) E3 ubiquitin-protein ligase complex which mediates the ubiquitination and subsequent proteasomal degradation of target proteins. Inhibits IFN-beta production through the IRF3 signaling pathway by targeting TBK1 via 'Lys-48'-linked ubiquitination, leading to its proteasomal degradation. In Macaca fascicularis (Crab-eating macaque), this protein is Ankyrin repeat and SOCS box protein 8 (ASB8).